The following is a 361-amino-acid chain: 3-dehydroquinate synthase (361 aa).

Residues Ser-72 to Lys-77, Thr-130 to Thr-131, Lys-142, and Lys-151 contribute to the NAD(+) site. Residues Glu-184, His-247, and His-264 each contribute to the Zn(2+) site.

It belongs to the sugar phosphate cyclases superfamily. Dehydroquinate synthase family. Requires Co(2+) as cofactor. The cofactor is Zn(2+). NAD(+) is required as a cofactor.

It localises to the cytoplasm. It catalyses the reaction 7-phospho-2-dehydro-3-deoxy-D-arabino-heptonate = 3-dehydroquinate + phosphate. It participates in metabolic intermediate biosynthesis; chorismate biosynthesis; chorismate from D-erythrose 4-phosphate and phosphoenolpyruvate: step 2/7. Functionally, catalyzes the conversion of 3-deoxy-D-arabino-heptulosonate 7-phosphate (DAHP) to dehydroquinate (DHQ). The sequence is that of 3-dehydroquinate synthase from Bacillus cereus (strain ZK / E33L).